The following is a 3993-amino-acid chain: Intermembrane lipid transfer protein VPS13B (3993 aa).

Residues 2–102 form the Chorein N-terminal domain; that stretch reads LESYVTPILM…KDGIQDDHES (101 aa). The segment at 100-133 is disordered; sequence HESCGSNSTNRSTAENTKSSIKPRRIQQAAPADP. The span at 103-119 shows a compositional bias: polar residues; the sequence is CGSNSTNRSTAENTKSS. Residues Ser-413, Ser-998, Ser-1001, and Ser-1032 each carry the phosphoserine modification. Disordered regions lie at residues 1262–1303, 1616–1637, and 1735–1770; these read SPVW…PFSD, DQLKPEKGSGSGGVPTESERNS, and TKATEISKQEQKKVDTFDGGTAETSSRYSGAQDSGI. Residues 1264–1291 are compositionally biased toward polar residues; sequence VWSSVGTAPPDTSTCSPSADIGTTTEGD. Residues 1739–1750 are compositionally biased toward basic and acidic residues; the sequence is EISKQEQKKVDT. The span at 1756-1770 shows a compositional bias: polar residues; sequence AETSSRYSGAQDSGI. Phosphoserine is present on Ser-1789. A disordered region spans residues 2048-2067; it reads HSSAHSKETSTPSDSILNMD. One can recognise an SHR-BD domain in the interval 2604 to 2683; sequence HFVICNDTQE…TIQYKGRTAS (80 aa). Positions 3880–3993 are localizes the protein to the Golgi apparatus; sequence AFPITEISCA…KNKALRKGFS (114 aa).

This sequence belongs to the VPS13 family. Interacts with STX6. Interacts with STX12 (via N-terminus). Interacts with RAB6A isoform 1 (GTP-bound) and isoform 2 (GTP-bound). Interacts with RAB6B (GTP-bound). In terms of tissue distribution, ubiquitously expressed in all examined tissues.

It is found in the recycling endosome membrane. The protein localises to the cytoplasmic vesicle. Its subcellular location is the secretory vesicle. The protein resides in the acrosome membrane. It localises to the golgi apparatus. It is found in the cis-Golgi network membrane. The protein localises to the endoplasmic reticulum-Golgi intermediate compartment membrane. Its subcellular location is the trans-Golgi network membrane. The protein resides in the early endosome membrane. It localises to the lysosome membrane. Functionally, mediates the transfer of lipids between membranes at organelle contact sites. Binds phosphatidylinositol 3-phosphate. Functions as a tethering factor in the slow endocytic recycling pathway, to assist traffic between early and recycling endosomes. Involved in the transport of proacrosomal vesicles to the nuclear dense lamina (NDL) during spermatid development. Plays a role in the assembly of the Golgi apparatus, possibly by mediating trafficking to the Golgi membrane. Plays a role in the development of the nervous system, and may be required for neuron projection development. May also play a role during adipose tissue development. Required for maintenance of the ocular lens. Required for proper organization of the Golgi. The chain is Intermembrane lipid transfer protein VPS13B from Mus musculus (Mouse).